The primary structure comprises 358 residues: Uroporphyrinogen decarboxylase (358 aa).

Substrate is bound by residues 36–40 (RQAGR), Asp-85, Tyr-160, Ser-215, and His-338.

The protein belongs to the uroporphyrinogen decarboxylase family. In terms of assembly, homodimer.

The protein localises to the cytoplasm. The catalysed reaction is uroporphyrinogen III + 4 H(+) = coproporphyrinogen III + 4 CO2. Its pathway is porphyrin-containing compound metabolism; protoporphyrin-IX biosynthesis; coproporphyrinogen-III from 5-aminolevulinate: step 4/4. In terms of biological role, catalyzes the decarboxylation of four acetate groups of uroporphyrinogen-III to yield coproporphyrinogen-III. This Corynebacterium glutamicum (strain ATCC 13032 / DSM 20300 / JCM 1318 / BCRC 11384 / CCUG 27702 / LMG 3730 / NBRC 12168 / NCIMB 10025 / NRRL B-2784 / 534) protein is Uroporphyrinogen decarboxylase.